The following is a 137-amino-acid chain: ATP synthase epsilon chain (137 aa).

This sequence belongs to the ATPase epsilon chain family. As to quaternary structure, F-type ATPases have 2 components, CF(1) - the catalytic core - and CF(0) - the membrane proton channel. CF(1) has five subunits: alpha(3), beta(3), gamma(1), delta(1), epsilon(1). CF(0) has three main subunits: a, b and c.

It is found in the cellular thylakoid membrane. Functionally, produces ATP from ADP in the presence of a proton gradient across the membrane. In Synechococcus sp. (strain JA-2-3B'a(2-13)) (Cyanobacteria bacterium Yellowstone B-Prime), this protein is ATP synthase epsilon chain.